A 41-amino-acid polypeptide reads, in one-letter code: Large ribosomal subunit protein bL36 (41 aa).

This sequence belongs to the bacterial ribosomal protein bL36 family.

This chain is Large ribosomal subunit protein bL36, found in Rickettsia canadensis (strain McKiel).